Reading from the N-terminus, the 195-residue chain is uncharacterized protein (195 aa).

The signal sequence occupies residues 1–20; the sequence is MLKFRLILTVLTVLLITVNG. The interval 26 to 195 is disordered; the sequence is IENKSSTSSS…LHNQYPPQQN (170 aa). A glycan (N-linked (GlcNAc...) asparagine) is linked at Asn28. Low complexity-rich tracts occupy residues 29–43 and 74–104; these read KSSTSSSKSAASKPS and QSKTAQAQPQPSAQSTNKPSFQNGQQSGGNQ. Composition is skewed to polar residues over residues 112-123 and 151-176; these read DPYQTGSYQGPY and PKNTVQSGYQQPMPGQQSMQVPNNGP.

In terms of tissue distribution, component of the acid-soluble organic matrix of calcified layers of the shell (at protein level).

The protein resides in the secreted. This is an uncharacterized protein from Lottia gigantea (Giant owl limpet).